The chain runs to 313 residues: Maintenance of mitochondrial morphology protein 1 (313 aa).

The Lumenal portion of the chain corresponds to 1-12 (MIHLPQGSFTQG). The helical transmembrane segment at 13-33 (LIVGQLLTLAIIYVFLRFFLF) threads the bilayer. Topologically, residues 34–313 (CSPIPKSVAN…APQEESSNED (280 aa)) are cytoplasmic. Residues 42-63 (ANSPKQTGNETPDETPSTPLSN) show a composition bias toward polar residues. Positions 42-65 (ANSPKQTGNETPDETPSTPLSNNK) are disordered. Positions 90–288 (EPESLDWFNV…SPQFQQIAIP (199 aa)) constitute an SMP-LTD domain.

Belongs to the MMM1 family. As to quaternary structure, homodimer. Component of the ER-mitochondria encounter structure (ERMES) or MDM complex, composed of mmm1, mdm10, mdm12 and mdm34. A mmm1 homodimer associates with one molecule of mdm12 on each side in a pairwise head-to-tail manner, and the SMP-LTD domains of mmm1 and mdm12 generate a continuous hydrophobic tunnel for phospholipid trafficking.

It localises to the endoplasmic reticulum membrane. In terms of biological role, component of the ERMES/MDM complex, which serves as a molecular tether to connect the endoplasmic reticulum (ER) and mitochondria. Components of this complex are involved in the control of mitochondrial shape and protein biogenesis, and function in nonvesicular lipid trafficking between the ER and mitochondria. The mdm12-mmm1 subcomplex functions in the major beta-barrel assembly pathway that is responsible for biogenesis of all outer membrane beta-barrel proteins, and acts in a late step after the SAM complex. The mdm10-mdm12-mmm1 subcomplex further acts in the TOM40-specific pathway after the action of the mdm12-mmm1 complex. Essential for establishing and maintaining the structure of mitochondria and maintenance of mtDNA nucleoids. This chain is Maintenance of mitochondrial morphology protein 1, found in Schizosaccharomyces pombe (strain 972 / ATCC 24843) (Fission yeast).